Reading from the N-terminus, the 500-residue chain is POU domain, class 3, transcription factor 3 (500 aa).

The span at 32–52 (GGGGGGGGGGGGAGGGGGGMQ) shows a compositional bias: gly residues. Disordered stretches follow at residues 32–63 (GGGG…SGAY), 122–190 (WSGS…WGAA), 231–319 (NGML…TPTS), and 461–500 (EKRM…TSVQ). 2 stretches are compositionally biased toward pro residues: residues 134–146 (QQPP…PPQG) and 171–181 (HLGPPPPPPHQ). Gly residues predominate over residues 241–251 (GGGGGGAGGGA). The span at 270–287 (HHHHHHHHAHPHPPHPHH) shows a compositional bias: basic residues. Positions 293–303 (HHGGGGGGAGP) are enriched in gly residues. Positions 314 to 388 (EDTPTSDDLE…LLNKWLEEAD (75 aa)) constitute a POU-specific domain. A DNA-binding region (homeobox) is located at residues 406-465 (KRKKRTSIEVSVKGALESHFLKCPKPSAQEITNLADSLQLEKEVVRVWFCNRRQKEKRMT). Over residues 468 to 486 (GIQQQTPDDVYSQVGTVSA) the composition is skewed to polar residues.

This sequence belongs to the POU transcription factor family. Class-3 subfamily. In terms of assembly, homodimer. Brain.

Its subcellular location is the nucleus. Transcription factor that acts synergistically with SOX11 and SOX4. Plays a role in neuronal development. Is implicated in an enhancer activity at the embryonic met-mesencephalic junction; the enhancer element contains the octamer motif (5'-ATTTGCAT-3'). In Homo sapiens (Human), this protein is POU domain, class 3, transcription factor 3.